Consider the following 155-residue polypeptide: 6,7-dimethyl-8-ribityllumazine synthase (155 aa).

5-amino-6-(D-ribitylamino)uracil-binding positions include phenylalanine 22, 57–59, and 81–83; these read AVE and TVI. Position 86–87 (86–87) interacts with (2S)-2-hydroxy-3-oxobutyl phosphate; the sequence is GT. Catalysis depends on histidine 89, which acts as the Proton donor. Position 114 (phenylalanine 114) interacts with 5-amino-6-(D-ribitylamino)uracil. Arginine 128 serves as a coordination point for (2S)-2-hydroxy-3-oxobutyl phosphate.

The protein belongs to the DMRL synthase family. In terms of assembly, forms an icosahedral capsid composed of 60 subunits, arranged as a dodecamer of pentamers.

The enzyme catalyses (2S)-2-hydroxy-3-oxobutyl phosphate + 5-amino-6-(D-ribitylamino)uracil = 6,7-dimethyl-8-(1-D-ribityl)lumazine + phosphate + 2 H2O + H(+). It functions in the pathway cofactor biosynthesis; riboflavin biosynthesis; riboflavin from 2-hydroxy-3-oxobutyl phosphate and 5-amino-6-(D-ribitylamino)uracil: step 1/2. Catalyzes the formation of 6,7-dimethyl-8-ribityllumazine by condensation of 5-amino-6-(D-ribitylamino)uracil with 3,4-dihydroxy-2-butanone 4-phosphate. This is the penultimate step in the biosynthesis of riboflavin. This Psychromonas ingrahamii (strain DSM 17664 / CCUG 51855 / 37) protein is 6,7-dimethyl-8-ribityllumazine synthase.